The chain runs to 101 residues: Signal recognition particle 19 kDa protein (101 aa).

It belongs to the SRP19 family. In terms of assembly, part of the signal recognition particle protein translocation system, which is composed of SRP and FtsY. Archaeal SRP consists of a 7S RNA molecule of 300 nucleotides and two protein subunits: SRP54 and SRP19.

The protein resides in the cytoplasm. Involved in targeting and insertion of nascent membrane proteins into the cytoplasmic membrane. Binds directly to 7S RNA and mediates binding of the 54 kDa subunit of the SRP. The sequence is that of Signal recognition particle 19 kDa protein from Methanosarcina barkeri (strain Fusaro / DSM 804).